The following is a 1106-amino-acid chain: Carbamoyl phosphate synthase large chain (1106 aa).

The segment at Met-1–Glu-402 is carboxyphosphate synthetic domain. Residues Arg-129, Arg-169, Gly-175, Gly-176, Glu-208, Val-210, Glu-215, Gly-241, Val-242, His-243, Gln-285, and Glu-299 each coordinate ATP. One can recognise an ATP-grasp 1 domain in the interval Lys-133–Ile-328. Positions 285, 299, and 301 each coordinate Mg(2+). Residues Gln-285, Glu-299, and Asn-301 each coordinate Mn(2+). The interval Ile-403–Ser-582 is oligomerization domain. The carbamoyl phosphate synthetic domain stretch occupies residues Asp-583 to Gly-964. Residues Val-707–Met-898 form the ATP-grasp 2 domain. The ATP site is built by Arg-743, Ser-782, Leu-784, Glu-789, Gly-814, Ile-815, His-816, Ser-817, Gln-857, and Glu-869. The Mg(2+) site is built by Gln-857, Glu-869, and Asn-871. The Mn(2+) site is built by Gln-857, Glu-869, and Asn-871. The MGS-like domain maps to Asp-965–Leu-1106. Residues Asp-965 to Leu-1106 are allosteric domain.

This sequence belongs to the CarB family. Composed of two chains; the small (or glutamine) chain promotes the hydrolysis of glutamine to ammonia, which is used by the large (or ammonia) chain to synthesize carbamoyl phosphate. Tetramer of heterodimers (alpha,beta)4. Requires Mg(2+) as cofactor. The cofactor is Mn(2+).

It carries out the reaction hydrogencarbonate + L-glutamine + 2 ATP + H2O = carbamoyl phosphate + L-glutamate + 2 ADP + phosphate + 2 H(+). The enzyme catalyses hydrogencarbonate + NH4(+) + 2 ATP = carbamoyl phosphate + 2 ADP + phosphate + 2 H(+). The protein operates within amino-acid biosynthesis; L-arginine biosynthesis; carbamoyl phosphate from bicarbonate: step 1/1. It functions in the pathway pyrimidine metabolism; UMP biosynthesis via de novo pathway; (S)-dihydroorotate from bicarbonate: step 1/3. Large subunit of the glutamine-dependent carbamoyl phosphate synthetase (CPSase). CPSase catalyzes the formation of carbamoyl phosphate from the ammonia moiety of glutamine, carbonate, and phosphate donated by ATP, constituting the first step of 2 biosynthetic pathways, one leading to arginine and/or urea and the other to pyrimidine nucleotides. The large subunit (synthetase) binds the substrates ammonia (free or transferred from glutamine from the small subunit), hydrogencarbonate and ATP and carries out an ATP-coupled ligase reaction, activating hydrogencarbonate by forming carboxy phosphate which reacts with ammonia to form carbamoyl phosphate. In Leptospira interrogans serogroup Icterohaemorrhagiae serovar copenhageni (strain Fiocruz L1-130), this protein is Carbamoyl phosphate synthase large chain.